A 319-amino-acid chain; its full sequence is Cobalamin biosynthesis protein CobD (319 aa).

Helical transmembrane passes span 55-75 (AVMWLVVVGVTWAVSWGVLAL), 78-98 (EIHPWFGWLVEIWMIFTVLAG), 153-173 (VDGIIAPLFFLFLGGAPLAMA), and 296-316 (LMWVASTLALALFIAVRCLLV).

The protein belongs to the CobD/CbiB family.

The protein resides in the cell membrane. Its pathway is cofactor biosynthesis; adenosylcobalamin biosynthesis. Functionally, converts cobyric acid to cobinamide by the addition of aminopropanol on the F carboxylic group. In Citrobacter koseri (strain ATCC BAA-895 / CDC 4225-83 / SGSC4696), this protein is Cobalamin biosynthesis protein CobD.